Here is a 238-residue protein sequence, read N- to C-terminus: Pyridoxine 5'-phosphate synthase (238 aa).

Positions 7 and 18 each coordinate 3-amino-2-oxopropyl phosphate. His-43 functions as the Proton acceptor in the catalytic mechanism. 2 residues coordinate 1-deoxy-D-xylulose 5-phosphate: Arg-45 and His-50. The Proton acceptor role is filled by Glu-70. Position 100 (Thr-100) interacts with 1-deoxy-D-xylulose 5-phosphate. His-190 (proton donor) is an active-site residue. 3-amino-2-oxopropyl phosphate contacts are provided by residues Asp-191 and Gly-213–His-214.

It belongs to the PNP synthase family. Homooctamer; tetramer of dimers.

Its subcellular location is the cytoplasm. The enzyme catalyses 3-amino-2-oxopropyl phosphate + 1-deoxy-D-xylulose 5-phosphate = pyridoxine 5'-phosphate + phosphate + 2 H2O + H(+). The protein operates within cofactor biosynthesis; pyridoxine 5'-phosphate biosynthesis; pyridoxine 5'-phosphate from D-erythrose 4-phosphate: step 5/5. Its function is as follows. Catalyzes the complicated ring closure reaction between the two acyclic compounds 1-deoxy-D-xylulose-5-phosphate (DXP) and 3-amino-2-oxopropyl phosphate (1-amino-acetone-3-phosphate or AAP) to form pyridoxine 5'-phosphate (PNP) and inorganic phosphate. This chain is Pyridoxine 5'-phosphate synthase, found in Cytophaga hutchinsonii (strain ATCC 33406 / DSM 1761 / CIP 103989 / NBRC 15051 / NCIMB 9469 / D465).